A 498-amino-acid polypeptide reads, in one-letter code: Acetyl-coenzyme A carboxylase carboxyl transferase subunit beta, chloroplastic (498 aa).

Residues 228-498 form the CoA carboxyltransferase N-terminal domain; sequence LWVQCEICYG…LNHNLSRTLT (271 aa). Residues Cys-232, Cys-235, Cys-251, and Cys-254 each coordinate Zn(2+). Residues 232-254 form a C4-type zinc finger; it reads CEICYGLNYKKFFKSKMNICEQC.

Belongs to the AccD/PCCB family. As to quaternary structure, acetyl-CoA carboxylase is a heterohexamer composed of biotin carboxyl carrier protein, biotin carboxylase and 2 subunits each of ACCase subunit alpha and ACCase plastid-coded subunit beta (accD). The cofactor is Zn(2+).

The protein resides in the plastid. It localises to the chloroplast stroma. It carries out the reaction N(6)-carboxybiotinyl-L-lysyl-[protein] + acetyl-CoA = N(6)-biotinyl-L-lysyl-[protein] + malonyl-CoA. Its pathway is lipid metabolism; malonyl-CoA biosynthesis; malonyl-CoA from acetyl-CoA: step 1/1. In terms of biological role, component of the acetyl coenzyme A carboxylase (ACC) complex. Biotin carboxylase (BC) catalyzes the carboxylation of biotin on its carrier protein (BCCP) and then the CO(2) group is transferred by the transcarboxylase to acetyl-CoA to form malonyl-CoA. This Populus trichocarpa (Western balsam poplar) protein is Acetyl-coenzyme A carboxylase carboxyl transferase subunit beta, chloroplastic.